Consider the following 440-residue polypeptide: Methionine aminopeptidase 2-2 (440 aa).

A disordered region spans residues 1 to 102 (MAAQVPTEAL…KGQEEEYRDE (102 aa)). The span at 36-46 (DSDDSDEEGEE) shows a compositional bias: acidic residues. Residues 56-70 (AKKKKKNKKKKKKKS) are compositionally biased toward basic residues. Histidine 194 contacts substrate. Residues aspartate 214, aspartate 225, and histidine 294 each contribute to the a divalent metal cation site. Substrate is bound at residue histidine 302. The a divalent metal cation site is built by glutamate 327 and glutamate 421.

Belongs to the peptidase M24A family. Methionine aminopeptidase eukaryotic type 2 subfamily. Co(2+) is required as a cofactor. It depends on Zn(2+) as a cofactor. The cofactor is Mn(2+). Fe(2+) serves as cofactor.

The protein resides in the cytoplasm. The enzyme catalyses Release of N-terminal amino acids, preferentially methionine, from peptides and arylamides.. In terms of biological role, cotranslationally removes the N-terminal methionine from nascent proteins. The N-terminal methionine is often cleaved when the second residue in the primary sequence is small and uncharged (Met-Ala-, Cys, Gly, Pro, Ser, Thr, or Val). The chain is Methionine aminopeptidase 2-2 from Colletotrichum graminicola (strain M1.001 / M2 / FGSC 10212) (Maize anthracnose fungus).